Here is a 549-residue protein sequence, read N- to C-terminus: Cytoplasmic trehalase (549 aa).

Substrate contacts are provided by residues R168, W175–D176, N212, R221–Q223, R292–E294, and G324. Catalysis depends on proton donor/acceptor residues D326 and E509. Residue E525 coordinates substrate.

This sequence belongs to the glycosyl hydrolase 37 family. As to quaternary structure, monomer.

Its subcellular location is the cytoplasm. It carries out the reaction alpha,alpha-trehalose + H2O = alpha-D-glucose + beta-D-glucose. It participates in glycan degradation; trehalose degradation; D-glucose from alpha,alpha-trehalose: step 1/1. Its function is as follows. Hydrolyzes trehalose to glucose. Could be involved, in cells returning to low osmolarity conditions, in the utilization of the accumulated cytoplasmic trehalose, which was synthesized in response to high osmolarity. In Escherichia coli O81 (strain ED1a), this protein is Cytoplasmic trehalase.